Here is a 339-residue protein sequence, read N- to C-terminus: DNA-directed RNA polymerase subunit alpha (339 aa).

The alpha N-terminal domain (alpha-NTD) stretch occupies residues 1 to 235 (MVIQKNWQEL…DQLQIFVNFE (235 aa)). Positions 251–339 (FNPALLKKVD…DLAKRFEEHY (89 aa)) are alpha C-terminal domain (alpha-CTD).

This sequence belongs to the RNA polymerase alpha chain family. Homodimer. The RNAP catalytic core consists of 2 alpha, 1 beta, 1 beta' and 1 omega subunit. When a sigma factor is associated with the core the holoenzyme is formed, which can initiate transcription.

The enzyme catalyses RNA(n) + a ribonucleoside 5'-triphosphate = RNA(n+1) + diphosphate. Functionally, DNA-dependent RNA polymerase catalyzes the transcription of DNA into RNA using the four ribonucleoside triphosphates as substrates. The sequence is that of DNA-directed RNA polymerase subunit alpha from Methylobacterium sp. (strain 4-46).